The sequence spans 362 residues: 3-dehydroquinate synthase (362 aa).

NAD(+) is bound by residues 71 to 76, 105 to 109, 129 to 130, Lys-142, Lys-151, and 169 to 172; these read DGEQYK, GVVGD, TT, and CLNT. Zn(2+) contacts are provided by Glu-184, His-247, and His-264.

Belongs to the sugar phosphate cyclases superfamily. Dehydroquinate synthase family. It depends on Co(2+) as a cofactor. Zn(2+) serves as cofactor. NAD(+) is required as a cofactor.

It is found in the cytoplasm. The catalysed reaction is 7-phospho-2-dehydro-3-deoxy-D-arabino-heptonate = 3-dehydroquinate + phosphate. Its pathway is metabolic intermediate biosynthesis; chorismate biosynthesis; chorismate from D-erythrose 4-phosphate and phosphoenolpyruvate: step 2/7. Its function is as follows. Catalyzes the conversion of 3-deoxy-D-arabino-heptulosonate 7-phosphate (DAHP) to dehydroquinate (DHQ). The sequence is that of 3-dehydroquinate synthase from Enterobacter sp. (strain 638).